Consider the following 353-residue polypeptide: Ribosome biogenesis protein BRX1 homolog (353 aa).

Residues 1–10 are compositionally biased toward basic residues; the sequence is MAATKRKRRG. Residues 1 to 46 form a disordered region; sequence MAATKRKRRGGFAVQAKKPKRNEIDAEPPAKRHATAEEVEEEERDR. Positions 21-36 are enriched in basic and acidic residues; it reads RNEIDAEPPAKRHATA. Positions 60 to 249 constitute a Brix domain; it reads ERILIFSSRG…LIKIFQGSFG (190 aa). A Glycyl lysine isopeptide (Lys-Gly) (interchain with G-Cter in SUMO2) cross-link involves residue lysine 160. Serine 261 is subject to Phosphoserine. Position 276 is an N6-acetyllysine (lysine 276). Glycyl lysine isopeptide (Lys-Gly) (interchain with G-Cter in SUMO2) cross-links involve residues lysine 314 and lysine 322.

The protein belongs to the BRX1 family.

It is found in the nucleus. The protein localises to the nucleolus. In terms of biological role, required for biogenesis of the 60S ribosomal subunit. This chain is Ribosome biogenesis protein BRX1 homolog (BRIX1), found in Homo sapiens (Human).